The sequence spans 831 residues: SID1 transmembrane family member 1 (831 aa).

Residues 1 to 19 (MLDCPRLALLCALPWLLRA) form the signal peptide. At 20–308 (AVPGHRAEPL…SVKGSVYVKS (289 aa)) the chain is on the extracellular side. N-linked (GlcNAc...) asparagine glycosylation is found at asparagine 67, asparagine 83, asparagine 136, and asparagine 281. The chain crosses the membrane as a helical span at residues 309-329 (SLFSVFVFLSFYLGCLLVVFV). Residues 330 to 441 (HHMRFQRKPV…DRRIVSKKYK (112 aa)) lie on the Cytoplasmic side of the membrane. Residues 354–408 (VSHPITASTPEGSNYGAIDESSSSPGRQMSSSDGGQPCHSDTDSSVEESDFDTMP) are disordered. The span at 374–385 (SSSSPGRQMSSS) shows a compositional bias: low complexity. The span at 397–408 (SSVEESDFDTMP) shows a compositional bias: acidic residues. Residues 442-462 (IYFWNIITIAVFYALPVMQLV) form a helical membrane-spanning segment. At 463–493 (ITYQTVVNVTGNQDICYYNFLCAHPLGVLSA) the chain is on the extracellular side. Asparagine 470 is a glycosylation site (N-linked (GlcNAc...) asparagine). A helical membrane pass occupies residues 494–514 (FNNILSNLGHVLLGFLFLLIV). Topologically, residues 515–540 (LRRDLLHRRALEAKDIFAMEYGIPKH) are cytoplasmic. A helical transmembrane segment spans residues 541 to 561 (FGLFYAMGIALMMEGVLSACY). Residues 562 to 571 (HVCPNYSNFQ) lie on the Extracellular side of the membrane. Asparagine 566 is a glycosylation site (N-linked (GlcNAc...) asparagine). A helical membrane pass occupies residues 572 to 589 (FDTSFMYMIAGLCMLKLY). The Cytoplasmic portion of the chain corresponds to 590 to 599 (QTRHPDINAS). Residues 600–620 (AYSAYASFAVVITLTVLGVVF) form a helical membrane-spanning segment. Residues 621–625 (GKNDV) are Extracellular-facing. Residues 626 to 646 (WFWIIFSAIHVLASLALSTQI) traverse the membrane as a helical segment. The Cytoplasmic segment spans residues 647–687 (YYMGRFKIDVSDTDLGIFRRAAMVFYTDCIQQCSRPLYMDR). The helical transmembrane segment at 688 to 708 (MVLLIVGNLVNWSFALFGLIY) threads the bilayer. Over 709–714 (RPRDFA) the chain is Extracellular. The chain crosses the membrane as a helical span at residues 715–735 (SYMLGIFICNLLLYLAFYIIM). Residues 736–745 (KLRSSEKVLP) are Cytoplasmic-facing. The helical transmembrane segment at 746-766 (LPVFCIVATAVVWAAALYFFF) threads the bilayer. The Extracellular segment spans residues 767 to 795 (QNLSSWEGTPAESREKNRECVLLGFFDDH). A glycan (N-linked (GlcNAc...) asparagine) is linked at asparagine 768. A helical membrane pass occupies residues 796-816 (DIWHFLSATALFFSFLVLLTL). Topologically, residues 817–831 (DDDLDVVRRDQIPVF) are cytoplasmic.

This sequence belongs to the SID1 family.

The protein resides in the membrane. Functionally, in vitro binds long double-stranded RNA (dsRNA) (500 and 700 base pairs), but not dsRNA shorter than 300 bp. Not involved in RNA autophagy, a process in which RNA is directly imported into lysosomes in an ATP-dependent manner, and degraded. This Rattus norvegicus (Rat) protein is SID1 transmembrane family member 1 (Sidt1).